A 173-amino-acid chain; its full sequence is NADH-ubiquinone oxidoreductase chain 6 (173 aa).

5 helical membrane-spanning segments follow: residues Met1–Ser21, Tyr27–Gly47, Val48–Val68, Val87–Phe107, and Cys139–Leu159.

The protein belongs to the complex I subunit 6 family.

It is found in the mitochondrion membrane. It carries out the reaction a ubiquinone + NADH + 5 H(+)(in) = a ubiquinol + NAD(+) + 4 H(+)(out). Core subunit of the mitochondrial membrane respiratory chain NADH dehydrogenase (Complex I) that is believed to belong to the minimal assembly required for catalysis. Complex I functions in the transfer of electrons from NADH to the respiratory chain. The immediate electron acceptor for the enzyme is believed to be ubiquinone. In Ptychoramphus aleuticus (Cassin's auklet), this protein is NADH-ubiquinone oxidoreductase chain 6 (MT-ND6).